The sequence spans 175 residues: uncharacterized protein (175 aa).

The N-terminal 11 residues, 1–11 (METWRKGSFRN), are a transit peptide targeting the mitochondrion. Residues 24-92 (RRLRRQSSVL…PRLYRESSSC (69 aa)) form a disordered region. Residues 41–63 (GDHEEYSNREVIRELQGRPDGRR) are compositionally biased toward basic and acidic residues.

It localises to the mitochondrion. This is an uncharacterized protein from Homo sapiens (Human).